We begin with the raw amino-acid sequence, 881 residues long: Receptor-like protein 41 (881 aa).

Positions 1 to 21 (MSELLLRLNFLLLLLLSCVSP) are cleaved as a signal peptide. At 22 to 844 (SSFVTFNNPV…EEQEQVLNWE (823 aa)) the chain is on the extracellular side. Residues asparagine 58, asparagine 70, asparagine 91, asparagine 109, and asparagine 145 are each glycosylated (N-linked (GlcNAc...) asparagine). LRR repeat units lie at residues 97-121 (FHEL…KFGM), 122-145 (LNKL…SFSN), 146-169 (LSML…VRNL), 170-195 (RKLR…LFEL), 197-219 (HLTY…EFGN), 220-244 (LNKL…ISNL), 245-267 (TQLT…VQNL), 268-291 (TKLS…LFTM), 293-317 (FLSY…SSSS), 319-340 (LESL…ISKL), 342-364 (NLKE…LFSS), 365-390 (FKSL…SYIS), 391-412 (LTLE…ILKS), 413-437 (LPNL…LWSL), 439-462 (RLSS…ILVN), and 463-486 (SSVQ…PLSI). An N-linked (GlcNAc...) asparagine glycan is attached at asparagine 189. N-linked (GlcNAc...) asparagine glycosylation is found at asparagine 243 and asparagine 266. N-linked (GlcNAc...) asparagine glycosylation is found at asparagine 305 and asparagine 312. Asparagine 402 carries an N-linked (GlcNAc...) asparagine glycan. Asparagine 462 carries an N-linked (GlcNAc...) asparagine glycan. An LRR 17; degenerate repeat occupies 487-506 (IYFSARYNRFKGDIPLSICN). Asparagine 506 and asparagine 519 each carry an N-linked (GlcNAc...) asparagine glycan. 10 LRR repeats span residues 507–528 (RSSL…PPCL), 529–552 (SNLL…YFAD), 554–576 (PLRS…LLNC), 578–599 (ALQF…YLKV), 600–624 (LPKL…NQGS), 627–651 (FPEL…FFVN), 701–724 (TSSA…IGLL), 725–748 (KALI…LANL), 749–772 (VKIE…LGTL), and 774–797 (FLAY…QITG). Asparagine 575 is a glycosylation site (N-linked (GlcNAc...) asparagine). Residue asparagine 731 is glycosylated (N-linked (GlcNAc...) asparagine). N-linked (GlcNAc...) asparagine glycosylation is present at asparagine 779. The chain crosses the membrane as a helical span at residues 845-865 (GVAIGYGVGVLLGLAIAQLIA). Residues 866–881 (SYKPEWLACLIKSRNR) are Cytoplasmic-facing.

This sequence belongs to the RLP family.

The protein resides in the cell membrane. Its function is as follows. May be involved in ABA-induced senescence responses. The protein is Receptor-like protein 41 of Arabidopsis thaliana (Mouse-ear cress).